Here is a 189-residue protein sequence, read N- to C-terminus: Crossover junction endodeoxyribonuclease RuvC (189 aa).

Active-site residues include Asp-9, Glu-70, and Asp-143. Mg(2+) contacts are provided by Asp-9, Glu-70, and Asp-143. The segment covering 162 to 178 has biased composition (low complexity); that stretch reads MGAASGNSSLTPAQKAW. The interval 162–189 is disordered; it reads MGAASGNSSLTPAQKAWADAEAKARRKR. Positions 179–189 are enriched in basic and acidic residues; sequence ADAEAKARRKR.

This sequence belongs to the RuvC family. Homodimer which binds Holliday junction (HJ) DNA. The HJ becomes 2-fold symmetrical on binding to RuvC with unstacked arms; it has a different conformation from HJ DNA in complex with RuvA. In the full resolvosome a probable DNA-RuvA(4)-RuvB(12)-RuvC(2) complex forms which resolves the HJ. Requires Mg(2+) as cofactor.

It localises to the cytoplasm. The enzyme catalyses Endonucleolytic cleavage at a junction such as a reciprocal single-stranded crossover between two homologous DNA duplexes (Holliday junction).. Its function is as follows. The RuvA-RuvB-RuvC complex processes Holliday junction (HJ) DNA during genetic recombination and DNA repair. Endonuclease that resolves HJ intermediates. Cleaves cruciform DNA by making single-stranded nicks across the HJ at symmetrical positions within the homologous arms, yielding a 5'-phosphate and a 3'-hydroxyl group; requires a central core of homology in the junction. The consensus cleavage sequence is 5'-(A/T)TT(C/G)-3'. Cleavage occurs on the 3'-side of the TT dinucleotide at the point of strand exchange. HJ branch migration catalyzed by RuvA-RuvB allows RuvC to scan DNA until it finds its consensus sequence, where it cleaves and resolves the cruciform DNA. The sequence is that of Crossover junction endodeoxyribonuclease RuvC from Paenarthrobacter aurescens (strain TC1).